The sequence spans 194 residues: Adenine phosphoribosyltransferase (194 aa).

This sequence belongs to the purine/pyrimidine phosphoribosyltransferase family. As to quaternary structure, homodimer.

The protein localises to the cytoplasm. It catalyses the reaction AMP + diphosphate = 5-phospho-alpha-D-ribose 1-diphosphate + adenine. The protein operates within purine metabolism; AMP biosynthesis via salvage pathway; AMP from adenine: step 1/1. Functionally, catalyzes a salvage reaction resulting in the formation of AMP, that is energically less costly than de novo synthesis. This Albidiferax ferrireducens (strain ATCC BAA-621 / DSM 15236 / T118) (Rhodoferax ferrireducens) protein is Adenine phosphoribosyltransferase.